Reading from the N-terminus, the 354-residue chain is S-adenosylmethionine:tRNA ribosyltransferase-isomerase (354 aa).

Belongs to the QueA family. Monomer.

Its subcellular location is the cytoplasm. The catalysed reaction is 7-aminomethyl-7-carbaguanosine(34) in tRNA + S-adenosyl-L-methionine = epoxyqueuosine(34) in tRNA + adenine + L-methionine + 2 H(+). It participates in tRNA modification; tRNA-queuosine biosynthesis. Transfers and isomerizes the ribose moiety from AdoMet to the 7-aminomethyl group of 7-deazaguanine (preQ1-tRNA) to give epoxyqueuosine (oQ-tRNA). The polypeptide is S-adenosylmethionine:tRNA ribosyltransferase-isomerase (Dichelobacter nodosus (strain VCS1703A)).